We begin with the raw amino-acid sequence, 91 residues long: Large ribosomal subunit protein uL23c (91 aa).

Belongs to the universal ribosomal protein uL23 family. Part of the 50S ribosomal subunit.

Its subcellular location is the plastid. It is found in the chloroplast. Functionally, binds to 23S rRNA. The polypeptide is Large ribosomal subunit protein uL23c (rpl23) (Pinus koraiensis (Korean pine)).